Reading from the N-terminus, the 53-residue chain is Rubredoxin (53 aa).

One can recognise a Rubredoxin-like domain in the interval 1-52; sequence MAKWRCKICGYIYDEDEGDPDNGISPGTKFEDLPDDWVCPLCGAPKSEFERI. Residues Cys6, Cys9, Cys39, and Cys42 each contribute to the Fe cation site.

It belongs to the rubredoxin family. Fe(3+) serves as cofactor.

In terms of biological role, rubredoxin is a small nonheme, iron protein lacking acid-labile sulfide. Its single Fe, chelated to 4 Cys, functions as an electron acceptor and may also stabilize the conformation of the molecule. In Pyrococcus abyssi (strain GE5 / Orsay), this protein is Rubredoxin (rub).